The chain runs to 467 residues: ATP-dependent protease ATPase subunit HslU (467 aa).

ATP contacts are provided by residues Val-22 and 64–69; that span reads GVGKTE. The interval 146–185 is disordered; sequence KASNNSNPLESLLGGAIPNFGNNDDEEEETPTEEIKTKRS. Acidic residues predominate over residues 168 to 177; it reads NDDEEEETPT. Residues Asp-280, Glu-345, and Arg-417 each coordinate ATP.

This sequence belongs to the ClpX chaperone family. HslU subfamily. A double ring-shaped homohexamer of HslV is capped on each side by a ring-shaped HslU homohexamer. The assembly of the HslU/HslV complex is dependent on binding of ATP.

It is found in the cytoplasm. Functionally, ATPase subunit of a proteasome-like degradation complex; this subunit has chaperone activity. The binding of ATP and its subsequent hydrolysis by HslU are essential for unfolding of protein substrates subsequently hydrolyzed by HslV. HslU recognizes the N-terminal part of its protein substrates and unfolds these before they are guided to HslV for hydrolysis. This Staphylococcus haemolyticus (strain JCSC1435) protein is ATP-dependent protease ATPase subunit HslU.